Reading from the N-terminus, the 226-residue chain is Uracil phosphoribosyltransferase (226 aa).

GTP is bound at residue 36–40; that stretch reads KGLVK. Residues arginine 86, arginine 111, and 145–153 contribute to the 5-phospho-alpha-D-ribose 1-diphosphate site; that span reads DPMLATGST. Uracil contacts are provided by residues isoleucine 211 and 216 to 218; that span reads GDA. Aspartate 217 is a binding site for 5-phospho-alpha-D-ribose 1-diphosphate.

It belongs to the UPRTase family. The cofactor is Mg(2+).

It carries out the reaction UMP + diphosphate = 5-phospho-alpha-D-ribose 1-diphosphate + uracil. It functions in the pathway pyrimidine metabolism; UMP biosynthesis via salvage pathway; UMP from uracil: step 1/1. Its activity is regulated as follows. Allosterically activated by GTP. Functionally, catalyzes the conversion of uracil and 5-phospho-alpha-D-ribose 1-diphosphate (PRPP) to UMP and diphosphate. The protein is Uracil phosphoribosyltransferase of Haloquadratum walsbyi (strain DSM 16790 / HBSQ001).